A 155-amino-acid chain; its full sequence is S-ribosylhomocysteine lyase (155 aa).

Positions 54, 58, and 122 each coordinate Fe cation.

Belongs to the LuxS family. Homodimer. The cofactor is Fe cation.

The enzyme catalyses S-(5-deoxy-D-ribos-5-yl)-L-homocysteine = (S)-4,5-dihydroxypentane-2,3-dione + L-homocysteine. Involved in the synthesis of autoinducer 2 (AI-2) which is secreted by bacteria and is used to communicate both the cell density and the metabolic potential of the environment. The regulation of gene expression in response to changes in cell density is called quorum sensing. Catalyzes the transformation of S-ribosylhomocysteine (RHC) to homocysteine (HC) and 4,5-dihydroxy-2,3-pentadione (DPD). The sequence is that of S-ribosylhomocysteine lyase from Deinococcus deserti (strain DSM 17065 / CIP 109153 / LMG 22923 / VCD115).